Consider the following 314-residue polypeptide: Oxaloacetate tautomerase FAHD2B, mitochondrial (314 aa).

The transit peptide at 1-84 (MLGSSGRRLL…ATLSVVRRAL (84 aa)) directs the protein to the mitochondrion. Mg(2+) contacts are provided by Glu-159, Glu-161, and Asp-190. Position 203 is an N6-acetyllysine; alternate (Lys-203). N6-succinyllysine; alternate is present on Lys-203. The residue at position 234 (Lys-234) is an N6-acetyllysine.

The protein belongs to the FAH family. The cofactor is Mg(2+). Mn(2+) is required as a cofactor.

It localises to the mitochondrion. It carries out the reaction oxaloacetate = enol-oxaloacetate. Tautomerase that converts enol-oxaloacetate, a strong inhibitor of succinate dehydrogenase, to the physiological keto form of oxaloacetate. It is thereby required to maximize aerobic respiration efficiency by preventing succinate dehydrogenase inhibition. The protein is Oxaloacetate tautomerase FAHD2B, mitochondrial of Bos taurus (Bovine).